A 64-amino-acid polypeptide reads, in one-letter code: Large ribosomal subunit protein bL35 (64 aa).

2 disordered regions span residues Met1 to Gly20 and Pro37 to Gly64.

This sequence belongs to the bacterial ribosomal protein bL35 family.

This Mycobacterium sp. (strain JLS) protein is Large ribosomal subunit protein bL35.